Reading from the N-terminus, the 371-residue chain is Neuropeptide S receptor (371 aa).

At 1–52 (MPANFTEGSFDSNGTGQMLDSSPVACTETVTFTEVVEGKEWGSFYYSFKTEQ) the chain is on the extracellular side. N-linked (GlcNAc...) asparagine glycosylation is found at Asn-4 and Asn-13. Residues 53–73 (LITLWVLFVFTIVGNSVVLFS) form a helical membrane-spanning segment. Topologically, residues 74 to 82 (TWRRKRKSR) are cytoplasmic. The helical transmembrane segment at 83-103 (MTFFVTQLAITDSFTGLVNIL) threads the bilayer. Over 104 to 123 (TDIIWRFTGDFMAPDLVCRV) the chain is Extracellular. An intrachain disulfide couples Cys-121 to Cys-197. A helical membrane pass occupies residues 124-144 (VRYLQVVLLYASTYVLVSLSI). The Cytoplasmic portion of the chain corresponds to 145–164 (DRYHAIVYPMKFLQGEKQAK). A helical transmembrane segment spans residues 165–185 (VLIVIAWSLSFLFSIPTLIIF). At 186 to 212 (GKRTLSNGEVQCWALWPDDSYWTPYMT) the chain is on the extracellular side. Residues 213–233 (IVAFLVYFIPLTIISVMYGIV) form a helical membrane-spanning segment. The Cytoplasmic segment spans residues 234–275 (IRTIWIKSKTYETVISNCSDGKLCSSYNRGLISKAKIKAIKY). A helical membrane pass occupies residues 276–296 (SIVIILAFICCWSPYFLFDIL). The Extracellular portion of the chain corresponds to 297-312 (DNFNLLPDTQERFYAS). Residues 313 to 333 (VIIQNLPALNSAINPLIYCVF) traverse the membrane as a helical segment. At 334–371 (SSSISFPCGERRSQDSIMTFRERTERHEMQILSKPEFI) the chain is on the cytoplasmic side.

This sequence belongs to the G-protein coupled receptor 1 family. Vasopressin/oxytocin receptor subfamily.

The protein resides in the cell membrane. Functionally, G-protein coupled receptor for neuropeptide S (NPS). Promotes mobilization of intracellular Ca(2+) stores. Inhibits cell growth in response to NPS binding. Involved in pathogenesis of asthma and other IgE-mediated diseases. This is Neuropeptide S receptor (NPSR1) from Macaca mulatta (Rhesus macaque).